Reading from the N-terminus, the 436-residue chain is Enolase (436 aa).

Gln-167 lines the (2R)-2-phosphoglycerate pocket. The active-site Proton donor is the Glu-209. 3 residues coordinate Mg(2+): Asp-246, Glu-291, and Asp-318. (2R)-2-phosphoglycerate contacts are provided by Lys-343, Arg-372, Ser-373, and Lys-394. Lys-343 (proton acceptor) is an active-site residue.

It belongs to the enolase family. As to quaternary structure, component of the RNA degradosome, a multiprotein complex involved in RNA processing and mRNA degradation. It depends on Mg(2+) as a cofactor.

It is found in the cytoplasm. The protein localises to the secreted. It localises to the cell surface. It carries out the reaction (2R)-2-phosphoglycerate = phosphoenolpyruvate + H2O. It functions in the pathway carbohydrate degradation; glycolysis; pyruvate from D-glyceraldehyde 3-phosphate: step 4/5. Its function is as follows. Catalyzes the reversible conversion of 2-phosphoglycerate (2-PG) into phosphoenolpyruvate (PEP). It is essential for the degradation of carbohydrates via glycolysis. In Haemophilus influenzae (strain 86-028NP), this protein is Enolase.